The primary structure comprises 443 residues: Ribosomal protein uS12 methylthiotransferase RimO (443 aa).

The MTTase N-terminal domain occupies 10–120; that stretch reads PRVGFVSLGC…VVKAVHQHLP (111 aa). Residues Cys19, Cys55, Cys84, Cys151, Cys155, and Cys158 each contribute to the [4Fe-4S] cluster site. The Radical SAM core domain occupies 137-375; sequence LTPAHYAYLK…DFQEDISTQR (239 aa). One can recognise a TRAM domain in the interval 377-443; that stretch reads ERWIGRDITV…VHDLYARPLP (67 aa).

This sequence belongs to the methylthiotransferase family. RimO subfamily. [4Fe-4S] cluster serves as cofactor.

It is found in the cytoplasm. It catalyses the reaction L-aspartate(89)-[ribosomal protein uS12]-hydrogen + (sulfur carrier)-SH + AH2 + 2 S-adenosyl-L-methionine = 3-methylsulfanyl-L-aspartate(89)-[ribosomal protein uS12]-hydrogen + (sulfur carrier)-H + 5'-deoxyadenosine + L-methionine + A + S-adenosyl-L-homocysteine + 2 H(+). In terms of biological role, catalyzes the methylthiolation of an aspartic acid residue of ribosomal protein uS12. The chain is Ribosomal protein uS12 methylthiotransferase RimO from Aromatoleum aromaticum (strain DSM 19018 / LMG 30748 / EbN1) (Azoarcus sp. (strain EbN1)).